Reading from the N-terminus, the 123-residue chain is Large ribosomal subunit protein bL12 (123 aa).

This sequence belongs to the bacterial ribosomal protein bL12 family. Homodimer. Part of the ribosomal stalk of the 50S ribosomal subunit. Forms a multimeric L10(L12)X complex, where L10 forms an elongated spine to which 2 to 4 L12 dimers bind in a sequential fashion. Binds GTP-bound translation factors.

In terms of biological role, forms part of the ribosomal stalk which helps the ribosome interact with GTP-bound translation factors. Is thus essential for accurate translation. In Rhodopseudomonas palustris (strain HaA2), this protein is Large ribosomal subunit protein bL12.